A 286-amino-acid polypeptide reads, in one-letter code: NAD kinase (286 aa).

The active-site Proton acceptor is aspartate 74. Residues 74 to 75 (DG), 148 to 149 (ND), aspartate 178, alanine 186, 189 to 194 (TAYNLS), and glutamine 244 each bind NAD(+).

It belongs to the NAD kinase family. A divalent metal cation serves as cofactor.

It is found in the cytoplasm. The catalysed reaction is NAD(+) + ATP = ADP + NADP(+) + H(+). Functionally, involved in the regulation of the intracellular balance of NAD and NADP, and is a key enzyme in the biosynthesis of NADP. Catalyzes specifically the phosphorylation on 2'-hydroxyl of the adenosine moiety of NAD to yield NADP. In Campylobacter jejuni (strain RM1221), this protein is NAD kinase.